The primary structure comprises 204 residues: Protein-L-isoaspartate O-methyltransferase (204 aa).

This sequence belongs to the methyltransferase superfamily. L-isoaspartyl/D-aspartyl protein methyltransferase family. Monomer.

The protein resides in the cytoplasm. The catalysed reaction is [protein]-L-isoaspartate + S-adenosyl-L-methionine = [protein]-L-isoaspartate alpha-methyl ester + S-adenosyl-L-homocysteine. Catalyzes the methyl esterification of L-isoaspartyl residues in peptides and proteins that result from spontaneous decomposition of normal L-aspartyl and L-asparaginyl residues. It plays a role in the repair and/or degradation of damaged proteins. In Rhizobium meliloti (strain 1021) (Ensifer meliloti), this protein is Protein-L-isoaspartate O-methyltransferase (pcm).